The following is a 59-amino-acid chain: Photosystem II reaction center protein K (59 aa).

Residues 1–22 (MLNIFSLICLNSALYSSSFFFG) constitute a propeptide that is removed on maturation. Residues 30–50 (FLSPIVDFMPVIPLFFFLLAF) traverse the membrane as a helical segment.

PSII is composed of 1 copy each of membrane proteins PsbA, PsbB, PsbC, PsbD, PsbE, PsbF, PsbH, PsbI, PsbJ, PsbK, PsbL, PsbM, PsbT, PsbX, PsbY, PsbZ, Psb30/Ycf12, at least 3 peripheral proteins of the oxygen-evolving complex and a large number of cofactors. It forms dimeric complexes. This protein, PsbL and plastoquinone-9 are found in PSII dimers but not seen in PSII monomers.

It localises to the plastid. The protein resides in the chloroplast thylakoid membrane. Functionally, one of the components of the core complex of photosystem II (PSII). PSII is a light-driven water:plastoquinone oxidoreductase that uses light energy to abstract electrons from H(2)O, generating O(2) and a proton gradient subsequently used for ATP formation. It consists of a core antenna complex that captures photons, and an electron transfer chain that converts photonic excitation into a charge separation. May be involved in PSII dimerization. One of the components of the core complex of photosystem II (PSII). PSII is a light-driven water:plastoquinone oxidoreductase that uses light energy to abstract electrons from H(2)O, generating O(2) and a proton gradient subsequently used for ATP formation. It consists of a core antenna complex that captures photons, and an electron transfer chain that converts photonic excitation into a charge separation. This Spinacia oleracea (Spinach) protein is Photosystem II reaction center protein K.